Here is a 192-residue protein sequence, read N- to C-terminus: Xanthine phosphoribosyltransferase (192 aa).

Residues Leu20 and Asn27 each coordinate xanthine. 128-132 (ANGQA) is a 5-phospho-alpha-D-ribose 1-diphosphate binding site. Residue Lys156 participates in xanthine binding.

This sequence belongs to the purine/pyrimidine phosphoribosyltransferase family. Xpt subfamily. Homodimer.

It is found in the cytoplasm. It catalyses the reaction XMP + diphosphate = xanthine + 5-phospho-alpha-D-ribose 1-diphosphate. It participates in purine metabolism; XMP biosynthesis via salvage pathway; XMP from xanthine: step 1/1. Functionally, converts the preformed base xanthine, a product of nucleic acid breakdown, to xanthosine 5'-monophosphate (XMP), so it can be reused for RNA or DNA synthesis. The protein is Xanthine phosphoribosyltransferase of Listeria monocytogenes serotype 4b (strain CLIP80459).